The following is a 397-amino-acid chain: Elongation factor Tu 1 (397 aa).

In terms of domain architecture, tr-type G spans 10–207; the sequence is KPHVNVGTIG…TLDSYIPEPV (198 aa). The interval 19–26 is G1; sequence GHVDHGKT. Residue 19–26 participates in GTP binding; it reads GHVDHGKT. Position 26 (threonine 26) interacts with Mg(2+). The interval 60-64 is G2; it reads GITIN. A G3 region spans residues 81–84; sequence DCPG. Residues 81–85 and 136–139 each bind GTP; these read DCPGH and NKAD. Residues 136–139 form a G4 region; the sequence is NKAD. Residues 174 to 176 form a G5 region; that stretch reads SAL.

Belongs to the TRAFAC class translation factor GTPase superfamily. Classic translation factor GTPase family. EF-Tu/EF-1A subfamily. In terms of assembly, monomer.

The protein localises to the cytoplasm. The catalysed reaction is GTP + H2O = GDP + phosphate + H(+). GTP hydrolase that promotes the GTP-dependent binding of aminoacyl-tRNA to the A-site of ribosomes during protein biosynthesis. In Stutzerimonas stutzeri (strain A1501) (Pseudomonas stutzeri), this protein is Elongation factor Tu 1.